The following is a 200-amino-acid chain: Intraflagellar transport protein 43 homolog (200 aa).

Disordered stretches follow at residues 56 to 76 and 175 to 200; these read KTGK…IAAP and ERID…SSKY. Residues 175 to 192 are compositionally biased toward basic and acidic residues; it reads ERIDAKDQPSDSRSRNAR.

Belongs to the IFT43 family. In terms of assembly, component of the IFT complex A (IFT-A) composed of at least che-11, daf-10, dyf-2, ift-139, ift-43 and ifta-1. Expressed in ciliated sensory neurons.

It is found in the cell projection. The protein localises to the cilium. Functionally, as a component of IFT complex A (IFT-A), a complex required for retrograde ciliary transport and entry into cilia of G protein-coupled receptors (GPCRs), it is involved in ciliogenesis. In particular, may act redundantly with the intraflagellar transport protein ift-139 to regulate the transport of specific ciliary cargo proteins such as che-3 which are related to motility. This chain is Intraflagellar transport protein 43 homolog, found in Caenorhabditis elegans.